We begin with the raw amino-acid sequence, 150 residues long: Submaxillary gland androgen-regulated protein 2, isoform alpha (150 aa).

A signal peptide spans 1–22 (MKALYMVFVLWVLIGCFLSGEC).

The protein localises to the secreted. May play a role in protection or detoxification. The polypeptide is Submaxillary gland androgen-regulated protein 2, isoform alpha (Smr2) (Mus musculus (Mouse)).